A 300-amino-acid polypeptide reads, in one-letter code: ADP,ATP carrier protein 2 (300 aa).

Solcar repeat units lie at residues 8 to 100, 113 to 203, and 214 to 299; these read VAFI…YKQV, RYFI…ARGM, and VSWA…IKKV. 5 helical membrane-spanning segments follow: residues 10 to 39, 77 to 101, 112 to 132, 181 to 201, and 213 to 233; these read FIKD…LLLQ, LANV…KQVF, TRYF…SLCF, VSVQ…DTAR, and YVSW…SYPF. The ADP site is built by arginine 82 and lysine 94. An ADP-binding site is contributed by arginine 237. The important for transport activity stretch occupies residues 237–242; that stretch reads RRRMMM. Residues 237-242 carry the Nucleotide carrier signature motif motif; the sequence is RRRMMM. Residues 276–293 form a helical membrane-spanning segment; it reads AFSNVLRGTGGAFVLVLY.

Belongs to the mitochondrial carrier (TC 2.A.29) family. As to quaternary structure, monomer.

The protein resides in the mitochondrion inner membrane. It carries out the reaction ADP(in) + ATP(out) = ADP(out) + ATP(in). With respect to regulation, the matrix-open state (m-state) is inhibited by the membrane-permeable bongkrekic acid (BKA). The cytoplasmic-open state (c-state) is inhibited by the membrane-impermeable toxic inhibitor carboxyatractyloside (CATR). In terms of biological role, ADP:ATP antiporter that mediates import of ADP into the mitochondrial matrix for ATP synthesis, and export of ATP out to fuel the cell. Cycles between the cytoplasmic-open state (c-state) and the matrix-open state (m-state): operates by the alternating access mechanism with a single substrate-binding site intermittently exposed to either the cytosolic (c-state) or matrix (m-state) side of the inner mitochondrial membrane. The chain is ADP,ATP carrier protein 2 from Anopheles gambiae (African malaria mosquito).